We begin with the raw amino-acid sequence, 4690 residues long: Nonribosomal peptide synthetase sidN (4690 aa).

Positions 238-656 (ARVRENPGRI…LGRLSSDQIK (419 aa)) are adenylation 1. A Carrier 1 domain is found at 779–856 (SSSIPMLQSV…DLDTKAQQAL (78 aa)). Position 816 is an O-(pantetheine 4'-phosphoryl)serine (Ser-816). Positions 925–1175 (PGGKAFIQHT…AFGNTMSGRF (251 aa)) are condensation 1. The tract at residues 1349–1760 (EFAQKSPNAI…GRKDDLVKIR (412 aa)) is adenylation 2. The region spanning 1889 to 1965 (PAWCIKHRPL…DLINHLSVKR (77 aa)) is the Carrier 2 domain. Position 1926 is an O-(pantetheine 4'-phosphoryl)serine (Ser-1926). The segment at 2001-2285 (PTTVFQDGML…SERLLESQLV (285 aa)) is condensation 2. Residues 2464-2869 (TWAKTHPEWK…GRKDEQVKVR (406 aa)) form an adenylation 3 region. The Carrier 3 domain maps to 3002 to 3079 (RDLTSIEKQI…ELGRMKNALK (78 aa)). Position 3040 is an O-(pantetheine 4'-phosphoryl)serine (Ser-3040). Residues 3121 to 3530 (CMPLQEVLVA…QMESLVTSFT (410 aa)) are condensation 3. The Carrier 4 domain occupies 3564-3637 (SVLEQQIRDV…KLATHIQTTS (74 aa)). Position 3598 is an O-(pantetheine 4'-phosphoryl)serine (Ser-3598). The tract at residues 3679-4087 (VYPLTPLQAG…FESIRKHPDE (409 aa)) is condensation 4. The 77-residue stretch at 4119–4195 (SAIDQFLDPL…KLCEVAFAKS (77 aa)) folds into the Carrier 5 domain. Ser-4156 is subject to O-(pantetheine 4'-phosphoryl)serine. The condensation 5 stretch occupies residues 4262–4589 (WVFKAENGLD…FNAHLNILWN (328 aa)).

This sequence belongs to the NRP synthetase family.

Its pathway is siderophore biosynthesis. Nonribosomal peptide synthetase required for the biosynthetis of epichloenin A, an extracellular siderophore that plays a crucial role in endophyte-grass symbioses. SidN assembles epichloenin A by activating and incorporating three trans-anhydromevalonylhydroxyornithine (trans-AMHO), 1 glutamine and 4 glycine moieties. Trans-AMHO is produced from L-ornithine via 2 steps involving a L-ornithine N(5)-monooxygenase and an AHMO-N(5)-transacylase that have still to be identified. The third adenylation domain (A3) of sidN incorporates the hydroxamate groups of the siderophore which forms an octahedral iron complex. The other component amino acids are assembled by sidN adenylation domains A1 and A2. In Epichloe festucae (strain E2368), this protein is Nonribosomal peptide synthetase sidN.